The chain runs to 288 residues: Acetyl-coenzyme A carboxylase carboxyl transferase subunit beta (288 aa).

Residues 30-288 (IMTKCPKCKK…KLHQEVKKDA (259 aa)) enclose the CoA carboxyltransferase N-terminal domain. Zn(2+) is bound by residues Cys34, Cys37, Cys53, and Cys56. A C4-type zinc finger spans residues 34–56 (CPKCKKIMYTKELNENLNVCFNC).

It belongs to the AccD/PCCB family. As to quaternary structure, acetyl-CoA carboxylase is a heterohexamer composed of biotin carboxyl carrier protein (AccB), biotin carboxylase (AccC) and two subunits each of ACCase subunit alpha (AccA) and ACCase subunit beta (AccD). It depends on Zn(2+) as a cofactor.

Its subcellular location is the cytoplasm. The enzyme catalyses N(6)-carboxybiotinyl-L-lysyl-[protein] + acetyl-CoA = N(6)-biotinyl-L-lysyl-[protein] + malonyl-CoA. The protein operates within lipid metabolism; malonyl-CoA biosynthesis; malonyl-CoA from acetyl-CoA: step 1/1. Functionally, component of the acetyl coenzyme A carboxylase (ACC) complex. Biotin carboxylase (BC) catalyzes the carboxylation of biotin on its carrier protein (BCCP) and then the CO(2) group is transferred by the transcarboxylase to acetyl-CoA to form malonyl-CoA. The sequence is that of Acetyl-coenzyme A carboxylase carboxyl transferase subunit beta from Staphylococcus haemolyticus (strain JCSC1435).